The chain runs to 715 residues: ATP-dependent DNA helicase Hel308 (715 aa).

ATP contacts are provided by residues Gln35 and 53 to 60 (SPTGSGKT). Positions 40–203 (KKGLLDGNRL…WLGAEPVATN (164 aa)) constitute a Helicase ATP-binding domain. Positions 152 to 155 (DELH) match the DEAH box motif. One can recognise a Helicase C-terminal domain in the interval 236-442 (HGDDAIIAYT…ERAFYTFLLG (207 aa)).

It belongs to the helicase family. Hel308 subfamily. Monomer. Interacts with PINA ATPase which decreases both DNA helicase activities of this protein.

It catalyses the reaction Couples ATP hydrolysis with the unwinding of duplex DNA by translocating in the 3'-5' direction.. It carries out the reaction ATP + H2O = ADP + phosphate + H(+). The catalysed reaction is Couples ATP hydrolysis with the unwinding of duplex DNA at the replication fork by translocating in the 5'-3' direction. This creates two antiparallel DNA single strands (ssDNA). The leading ssDNA polymer is the template for DNA polymerase III holoenzyme which synthesizes a continuous strand.. Its activity is regulated as follows. PINA inhibits the (weak) 5'-3' but not the 3'-5' helicase activity of this protein on overhang substrates. In terms of biological role, DNA-dependent ATPase and 3'-5' DNA helicase that may be involved in repair of stalled replication forks. Has predominantly 3'-5' helicase activity but also a weak 5'-3' helicase activity. Has the ability to unwind replication forks, preferentially removing the lagging strand. Hjc, Hjm (Hel308) and branch migration ATPase PINA coordinate HJ migration and cleavage of replication forks in a coordinated way. In Saccharolobus islandicus (strain REY15A) (Sulfolobus islandicus), this protein is ATP-dependent DNA helicase Hel308.